A 931-amino-acid chain; its full sequence is Protein phosphatase 1 regulatory subunit 37 homolog (931 aa).

The disordered stretch occupies residues 20–71 (TAASSPASPIPPTSPSMFATPPHQQSHSSATSVRKKVCQEANSSADDPDSDA). A compositionally biased stretch (polar residues) spans 41–51 (PHQQSHSSATS). 8 LRR repeats span residues 232–259 (AISLQMLNLRYTNLNDRSIPSLCKLARA), 262–285 (SASLTCIHLENTQMSGKNLLVLIC), 290–314 (NTGIRELYLGDNGLQPTDGSHIYQL), 323–346 (LLDLRNNNIGDSGVRHICEGLRNR), 351–374 (KSALSAMVLWNNNVTGASMDSLAE), 379–407 (NTKIETLNIGSNNLGVEGVARLKPALVSN), 409–430 (HLHRLGLQNTGINCEGAIILAE), and 435–458 (NTALLRVDIRDNPIALAGLLALHS). The span at 519 to 533 (QDHVSEDTEKENKDA) shows a compositional bias: basic and acidic residues. Disordered regions lie at residues 519–602 (QDHV…RHQR) and 780–807 (PDCTNTCEEPTTSREAERKRAEETIRQR). Over residues 534 to 547 (DNDDKEPENEDGDT) the composition is skewed to acidic residues. Over residues 554-563 (SDASADQSDS) the composition is skewed to low complexity. Composition is skewed to basic and acidic residues over residues 564–584 (PADKEKSEKSKKENNNNEKRP) and 790–807 (TTSREAERKRAEETIRQR).

This sequence belongs to the PPP1R37 family.

This Caenorhabditis briggsae protein is Protein phosphatase 1 regulatory subunit 37 homolog.